We begin with the raw amino-acid sequence, 123 residues long: Ferredoxin-5 (123 aa).

One can recognise a 2Fe-2S ferredoxin-type domain in the interval 2–119 (PNITFTSPIM…DVMVHFTGTP (118 aa)). Cysteine 42, cysteine 47, cysteine 50, and cysteine 102 together coordinate [2Fe-2S] cluster.

This sequence belongs to the 2Fe2S plant-type ferredoxin family. The cofactor is [2Fe-2S] cluster.

Its function is as follows. Ferredoxins are iron-sulfur proteins that transfer electrons in a wide variety of metabolic reactions. This ferredoxin probably participates in nitrogen fixation. The polypeptide is Ferredoxin-5 (fdxD) (Rhodobacter capsulatus (Rhodopseudomonas capsulata)).